We begin with the raw amino-acid sequence, 93 residues long: Small ribosomal subunit protein bS18 (93 aa).

The protein belongs to the bacterial ribosomal protein bS18 family. Part of the 30S ribosomal subunit. Forms a tight heterodimer with protein bS6.

In terms of biological role, binds as a heterodimer with protein bS6 to the central domain of the 16S rRNA, where it helps stabilize the platform of the 30S subunit. The chain is Small ribosomal subunit protein bS18 from Variovorax paradoxus (strain S110).